Consider the following 742-residue polypeptide: Phosphoribosylformylglycinamidine synthase subunit PurL (742 aa).

The active site involves H50. Residues Y53 and K92 each contribute to the ATP site. E94 is a binding site for Mg(2+). Substrate-binding positions include S95–H98 and R117. H96 functions as the Proton acceptor in the catalytic mechanism. Position 118 (D118) interacts with Mg(2+). Position 241 (Q241) interacts with substrate. D269 is a binding site for Mg(2+). Substrate is bound at residue E313–Q315. ATP contacts are provided by D494 and G531. N532 serves as a coordination point for Mg(2+). S534 contributes to the substrate binding site.

Belongs to the FGAMS family. As to quaternary structure, monomer. Part of the FGAM synthase complex composed of 1 PurL, 1 PurQ and 2 PurS subunits.

It localises to the cytoplasm. It carries out the reaction N(2)-formyl-N(1)-(5-phospho-beta-D-ribosyl)glycinamide + L-glutamine + ATP + H2O = 2-formamido-N(1)-(5-O-phospho-beta-D-ribosyl)acetamidine + L-glutamate + ADP + phosphate + H(+). It functions in the pathway purine metabolism; IMP biosynthesis via de novo pathway; 5-amino-1-(5-phospho-D-ribosyl)imidazole from N(2)-formyl-N(1)-(5-phospho-D-ribosyl)glycinamide: step 1/2. Its function is as follows. Part of the phosphoribosylformylglycinamidine synthase complex involved in the purines biosynthetic pathway. Catalyzes the ATP-dependent conversion of formylglycinamide ribonucleotide (FGAR) and glutamine to yield formylglycinamidine ribonucleotide (FGAM) and glutamate. The FGAM synthase complex is composed of three subunits. PurQ produces an ammonia molecule by converting glutamine to glutamate. PurL transfers the ammonia molecule to FGAR to form FGAM in an ATP-dependent manner. PurS interacts with PurQ and PurL and is thought to assist in the transfer of the ammonia molecule from PurQ to PurL. The polypeptide is Phosphoribosylformylglycinamidine synthase subunit PurL (Sinorhizobium fredii (strain NBRC 101917 / NGR234)).